The following is a 220-amino-acid chain: Probable chemoreceptor glutamine deamidase CheD (220 aa).

Belongs to the CheD family.

It carries out the reaction L-glutaminyl-[protein] + H2O = L-glutamyl-[protein] + NH4(+). In terms of biological role, probably deamidates glutamine residues to glutamate on methyl-accepting chemotaxis receptors (MCPs), playing an important role in chemotaxis. In Cupriavidus metallidurans (strain ATCC 43123 / DSM 2839 / NBRC 102507 / CH34) (Ralstonia metallidurans), this protein is Probable chemoreceptor glutamine deamidase CheD.